The following is a 113-amino-acid chain: uncharacterized protein (113 aa).

The transit peptide at 1-14 directs the protein to the mitochondrion; the sequence is MATRNALRIVSRRF. Residues 41–79 form a disordered region; that stretch reads QKLARQGPGEQAAGSASEAKVAGATASASAESGPKVSED. A compositionally biased stretch (low complexity) spans 55–73; it reads SASEAKVAGATASASAESG.

It localises to the mitochondrion. This is an uncharacterized protein from Arabidopsis thaliana (Mouse-ear cress).